A 149-amino-acid polypeptide reads, in one-letter code: Cyanate hydratase (149 aa).

Residues arginine 90, glutamate 93, and serine 116 contribute to the active site.

Belongs to the cyanase family.

The catalysed reaction is cyanate + hydrogencarbonate + 3 H(+) = NH4(+) + 2 CO2. Catalyzes the reaction of cyanate with bicarbonate to produce ammonia and carbon dioxide. In Aquifex aeolicus (strain VF5), this protein is Cyanate hydratase.